The primary structure comprises 656 residues: Putative L-type lectin-domain containing receptor kinase V.2 (656 aa).

The N-terminal stretch at 1 to 23 is a signal peptide; it reads MSLLLKMLLFSLFFFYMASISQC. The Extracellular segment spans residues 24 to 276; the sequence is SDPTGGQFSF…EDQERSLSSK (253 aa). A legume-lectin like region spans residues 29-248; it reads GQFSFNGYLY…SHYILGWSFN (220 aa). N-linked (GlcNAc...) asparagine glycosylation is found at N78, N124, N159, N190, and N257. A helical transmembrane segment spans residues 277–297; that stretch reads ILAISLSISGVTLVIVLILGV. The Cytoplasmic portion of the chain corresponds to 298-656; it reads MLFLKRKKFL…MTESFLSSGR (359 aa). Positions 334–615 constitute a Protein kinase domain; that stretch reads FKNSEVLGKG…GVATLPHNLL (282 aa). Residues 340-348 and K363 each bind ATP; that span reads LGKGGFGKV. D459 serves as the catalytic Proton acceptor.

This sequence in the C-terminal section; belongs to the protein kinase superfamily. Ser/Thr protein kinase family. In the N-terminal section; belongs to the leguminous lectin family.

It localises to the cell membrane. It carries out the reaction L-seryl-[protein] + ATP = O-phospho-L-seryl-[protein] + ADP + H(+). The enzyme catalyses L-threonyl-[protein] + ATP = O-phospho-L-threonyl-[protein] + ADP + H(+). The sequence is that of Putative L-type lectin-domain containing receptor kinase V.2 (LECRK52) from Arabidopsis thaliana (Mouse-ear cress).